Reading from the N-terminus, the 345-residue chain is Hydroxymethylglutaryl-CoA synthase (345 aa).

Asp28 contacts (3S)-3-hydroxy-3-methylglutaryl-CoA. The Proton donor/acceptor role is filled by Glu80. (3S)-3-hydroxy-3-methylglutaryl-CoA is bound by residues Cys112 and Thr153. Cys112 acts as the Acyl-thioester intermediate in catalysis. Arg199 provides a ligand contact to CoA. The (3S)-3-hydroxy-3-methylglutaryl-CoA site is built by Thr201 and His234. The active-site Proton donor/acceptor is the His234. Lys239 serves as a coordination point for CoA. The (3S)-3-hydroxy-3-methylglutaryl-CoA site is built by Arg243, Asn266, and Ser296.

Belongs to the thiolase-like superfamily. Archaeal HMG-CoA synthase family. Interacts with acetoacetyl-CoA thiolase that catalyzes the precedent step in the pathway and with a DUF35 protein. The acetoacetyl-CoA thiolase/HMG-CoA synthase complex channels the intermediate via a fused CoA-binding site, which allows for efficient coupling of the endergonic thiolase reaction with the exergonic HMGCS reaction.

It catalyses the reaction acetoacetyl-CoA + acetyl-CoA + H2O = (3S)-3-hydroxy-3-methylglutaryl-CoA + CoA + H(+). Its pathway is metabolic intermediate biosynthesis; (R)-mevalonate biosynthesis; (R)-mevalonate from acetyl-CoA: step 2/3. Functionally, catalyzes the condensation of acetyl-CoA with acetoacetyl-CoA to form 3-hydroxy-3-methylglutaryl-CoA (HMG-CoA). Functions in the mevalonate (MVA) pathway leading to isopentenyl diphosphate (IPP), a key precursor for the biosynthesis of isoprenoid compounds that are building blocks of archaeal membrane lipids. The chain is Hydroxymethylglutaryl-CoA synthase from Methanocaldococcus jannaschii (strain ATCC 43067 / DSM 2661 / JAL-1 / JCM 10045 / NBRC 100440) (Methanococcus jannaschii).